Consider the following 25-residue polypeptide: Arginine attenuator peptide (25 aa).

Belongs to the arginine attenuator peptide family.

Its function is as follows. Arginine attenuator peptide (AAP) that has a regulatory role in the production of arginine-specific carbamoyl phosphate synthetase. Encoded by an upstream open reading frame (uORF) within the 5'-leader region of arginine-specific carbamoyl phosphate synthetase small chain (CPA1) mRNA, it attenuates the translation of the downstream CPA1 ORF. In the presence of high concentrations of arginine, ribosomes translating the uORF encoding AAP stall at the termination codon, resulting in reduced translation from the downstream CPA1 initiation codon. In Saccharomyces cerevisiae (strain ATCC 204508 / S288c) (Baker's yeast), this protein is Arginine attenuator peptide.